The chain runs to 200 residues: N-(5'-phosphoribosyl)anthranilate isomerase (200 aa).

The protein belongs to the TrpF family.

The catalysed reaction is N-(5-phospho-beta-D-ribosyl)anthranilate = 1-(2-carboxyphenylamino)-1-deoxy-D-ribulose 5-phosphate. It functions in the pathway amino-acid biosynthesis; L-tryptophan biosynthesis; L-tryptophan from chorismate: step 3/5. The sequence is that of N-(5'-phosphoribosyl)anthranilate isomerase from Endomicrobium trichonymphae.